We begin with the raw amino-acid sequence, 279 residues long: Protein FAM151B (279 aa).

It belongs to the menorin family.

Functionally, essential for survival of retinal photoreceptor cells. This Mus musculus (Mouse) protein is Protein FAM151B (Fam151b).